Reading from the N-terminus, the 563-residue chain is GTPase Obg (563 aa).

The 167-residue stretch at 2-168 (SDFVDRVTVH…RDVILELKSI (167 aa)) folds into the Obg domain. Positions 169-349 (ADVALVGFPS…LNFALSALVH (181 aa)) constitute an OBG-type G domain. GTP-binding positions include 175 to 182 (GFPSAGKS), 200 to 204 (FTTLV), 221 to 224 (DVPG), 301 to 304 (NKID), and 330 to 332 (STA). Ser-182 and Thr-202 together coordinate Mg(2+). One can recognise an OCT domain in the interval 383–469 (DEGGSALEFT…ARMVEFDWDP (87 aa)). 2 disordered regions span residues 478 to 509 (LDGS…ERRA) and 528 to 563 (ERKA…ETEE). Over residues 486 to 509 (RGKDLRLEEQDPRTHRRSNAERRA) the composition is skewed to basic and acidic residues.

This sequence belongs to the TRAFAC class OBG-HflX-like GTPase superfamily. OBG GTPase family. In terms of assembly, monomer. It depends on Mg(2+) as a cofactor.

Its subcellular location is the cytoplasm. An essential GTPase which binds GTP, GDP and possibly (p)ppGpp with moderate affinity, with high nucleotide exchange rates and a fairly low GTP hydrolysis rate. Plays a role in control of the cell cycle, stress response, ribosome biogenesis and in those bacteria that undergo differentiation, in morphogenesis control. In Bifidobacterium longum subsp. infantis (strain ATCC 15697 / DSM 20088 / JCM 1222 / NCTC 11817 / S12), this protein is GTPase Obg.